Here is a 679-residue protein sequence, read N- to C-terminus: tRNA uridine 5-carboxymethylaminomethyl modification enzyme MnmG (679 aa).

FAD is bound at residue 13 to 18 (GGGHAG). 280-294 (GPRYCPSVEDKINRF) contacts NAD(+).

This sequence belongs to the MnmG family. Homodimer. Heterotetramer of two MnmE and two MnmG subunits. It depends on FAD as a cofactor.

The protein resides in the cytoplasm. NAD-binding protein involved in the addition of a carboxymethylaminomethyl (cmnm) group at the wobble position (U34) of certain tRNAs, forming tRNA-cmnm(5)s(2)U34. The chain is tRNA uridine 5-carboxymethylaminomethyl modification enzyme MnmG from Albidiferax ferrireducens (strain ATCC BAA-621 / DSM 15236 / T118) (Rhodoferax ferrireducens).